The primary structure comprises 361 residues: POU domain, class 3, transcription factor 4 (361 aa).

2 disordered regions span residues 99–131 (PHVA…GQPL) and 144–192 (MLEH…PTSD). Residues 122-131 (PSITSSGQPL) show a composition bias toward polar residues. A compositionally biased stretch (basic and acidic residues) spans 165 to 183 (VLREPPDHGELGSHHCQDH). The 75-residue stretch at 186–260 (EETPTSDELE…LLNKWLEEAD (75 aa)) folds into the POU-specific domain. Residue S265 is modified to Phosphoserine. A DNA-binding region (homeobox) is located at residues 278–337 (KRKKRTSIEVSVKGVLETHFLKCPKPAAQEISSLADSLQLEKEVVRVWFCNRRQKEKRMT).

Belongs to the POU transcription factor family. Class-3 subfamily. Interacts with HNRNPU. In terms of tissue distribution, brain specific.

The protein resides in the nucleus. Functionally, probable transcription factor which exert its primary action widely during early neural development and in a very limited set of neurons in the mature brain. The protein is POU domain, class 3, transcription factor 4 (POU3F4) of Homo sapiens (Human).